A 217-amino-acid chain; its full sequence is Adenylate kinase (217 aa).

Residue 10–15 (GAGKGT) coordinates ATP. The NMP stretch occupies residues 30–59 (STGDMLRAAVKAGTEMGLAAKKVMDAGGLV). Residues threonine 31, arginine 36, 57–59 (GLV), 85–88 (GFPR), and glutamine 92 each bind AMP. The interval 122 to 159 (GRRSHPASGRTYHVKFNPPKVDGVDDVTGEPLVQRDDD) is LID. Residues arginine 123 and 132-133 (TY) contribute to the ATP site. AMP contacts are provided by arginine 156 and arginine 167. Residue glycine 203 coordinates ATP.

This sequence belongs to the adenylate kinase family. As to quaternary structure, monomer.

The protein resides in the cytoplasm. The enzyme catalyses AMP + ATP = 2 ADP. It participates in purine metabolism; AMP biosynthesis via salvage pathway; AMP from ADP: step 1/1. Catalyzes the reversible transfer of the terminal phosphate group between ATP and AMP. Plays an important role in cellular energy homeostasis and in adenine nucleotide metabolism. This is Adenylate kinase from Leptothrix cholodnii (strain ATCC 51168 / LMG 8142 / SP-6) (Leptothrix discophora (strain SP-6)).